A 354-amino-acid polypeptide reads, in one-letter code: Uroporphyrinogen decarboxylase (354 aa).

Substrate is bound by residues 27-31 (RQAGR), Asp77, Tyr154, Thr209, and His327.

Belongs to the uroporphyrinogen decarboxylase family. In terms of assembly, homodimer.

Its subcellular location is the cytoplasm. The enzyme catalyses uroporphyrinogen III + 4 H(+) = coproporphyrinogen III + 4 CO2. It functions in the pathway porphyrin-containing compound metabolism; protoporphyrin-IX biosynthesis; coproporphyrinogen-III from 5-aminolevulinate: step 4/4. In terms of biological role, catalyzes the decarboxylation of four acetate groups of uroporphyrinogen-III to yield coproporphyrinogen-III. This Escherichia coli O81 (strain ED1a) protein is Uroporphyrinogen decarboxylase.